The following is a 292-amino-acid chain: UPF0282 protein MJ1629 (292 aa).

The protein belongs to the UPF0282 family.

This Methanocaldococcus jannaschii (strain ATCC 43067 / DSM 2661 / JAL-1 / JCM 10045 / NBRC 100440) (Methanococcus jannaschii) protein is UPF0282 protein MJ1629.